Reading from the N-terminus, the 92-residue chain is Small ribosomal subunit protein uS17 (92 aa).

The protein belongs to the universal ribosomal protein uS17 family. Part of the 30S ribosomal subunit.

Its function is as follows. One of the primary rRNA binding proteins, it binds specifically to the 5'-end of 16S ribosomal RNA. This Mycoplasma mobile (strain ATCC 43663 / 163K / NCTC 11711) (Mesomycoplasma mobile) protein is Small ribosomal subunit protein uS17.